The following is a 584-amino-acid chain: Alkaline nuclease (584 aa).

The tract at residues 409–430 (GGGADHHLRGSPGDSPPPIPFE) is disordered.

This sequence belongs to the herpesviridae alkaline nuclease family. In terms of assembly, interacts with major DNA-binding protein; this interaction increases the nuclease processivity of the alkaline exonuclease.

The protein localises to the host nucleus. It is found in the host cytoplasm. Functionally, plays a role in processing non linear or branched viral DNA intermediates in order to promote the production of mature packaged unit-length linear progeny viral DNA molecules. Exhibits endonuclease and exonuclease activities and accepts both double-stranded and single-stranded DNA as substrate. Exonuclease digestion of DNA is in the 5'-&gt; 3' direction and the products are 5'-monophosphate nucleosides. Additionally, forms a recombinase with the major DNA-binding protein, which displays strand exchange activity. This chain is Alkaline nuclease (UL98), found in Human cytomegalovirus (strain AD169) (HHV-5).